A 222-amino-acid chain; its full sequence is UPF0758 protein YPN_3801 (222 aa).

The 123-residue stretch at 100 to 222 (VLLNPGITQK…CVSFAERGWL (123 aa)) folds into the MPN domain. Zn(2+)-binding residues include H171, H173, and D184. A JAMM motif motif is present at residues 171-184 (HNHPSGKAEPSQAD).

It belongs to the UPF0758 family. YicR subfamily.

This Yersinia pestis bv. Antiqua (strain Nepal516) protein is UPF0758 protein YPN_3801.